We begin with the raw amino-acid sequence, 256 residues long: Tryptophan synthase alpha chain (256 aa).

Residues E51 and D62 each act as proton acceptor in the active site.

This sequence belongs to the TrpA family. Tetramer of two alpha and two beta chains.

It carries out the reaction (1S,2R)-1-C-(indol-3-yl)glycerol 3-phosphate + L-serine = D-glyceraldehyde 3-phosphate + L-tryptophan + H2O. It participates in amino-acid biosynthesis; L-tryptophan biosynthesis; L-tryptophan from chorismate: step 5/5. The alpha subunit is responsible for the aldol cleavage of indoleglycerol phosphate to indole and glyceraldehyde 3-phosphate. In Solidesulfovibrio magneticus (strain ATCC 700980 / DSM 13731 / RS-1) (Desulfovibrio magneticus), this protein is Tryptophan synthase alpha chain.